We begin with the raw amino-acid sequence, 886 residues long: Cytosolic carboxypeptidase-like protein 5 (886 aa).

Residues 157-570 form the Peptidase M14 domain; the sequence is YPFSYSDCQD…AMAIAALDMA (414 aa). The Zn(2+) site is built by H252 and E255. Over residues 344-353 the composition is skewed to polar residues; the sequence is AKSPTNQQPT. Disordered regions lie at residues 344-363 and 374-401; these read AKSPTNQQPTLHLPPEAPLS and EAHLGQSPDGENPATWPETEPAEEKTDP. A Zn(2+)-binding site is contributed by H434. The active-site Proton donor/acceptor is E516. Disordered stretches follow at residues 602 to 737 and 783 to 846; these read GLTS…RNMG and TRLQ…PAFS. Polar residues predominate over residues 621–635; it reads PKSNNSLPVSCSENA. Residues 643-654 are compositionally biased toward low complexity; it reads STGTSTGGSSSS. Positions 655 to 666 are enriched in polar residues; sequence QQNSPQMKNSPS. The segment covering 714 to 737 has biased composition (low complexity); that stretch reads STTSSLAPSPTLASSGPTSSRNMG. Over residues 805–815 the composition is skewed to polar residues; sequence SSPTSPIPQTR. S841 is modified (phosphoserine).

It belongs to the peptidase M14 family. Zn(2+) serves as cofactor. Widely expressed. Highly expressed in testis, and moderately in pituitary, brain, eye and kidney.

The protein resides in the cytoplasm. It localises to the cytosol. Its subcellular location is the nucleus. It is found in the cytoskeleton. The protein localises to the spindle. The protein resides in the midbody. The enzyme catalyses gamma-L-glutamyl-L-glutamyl-[protein] + H2O = L-glutamyl-[protein] + L-glutamate. The catalysed reaction is (L-glutamyl)(n+1)-gamma-L-glutamyl-L-glutamyl-[protein] + H2O = (L-glutamyl)(n)-gamma-L-glutamyl-L-glutamyl-[protein] + L-glutamate. It catalyses the reaction C-terminal L-alpha-aminoacyl-L-glutamyl-[tubulin] + H2O = C-terminal L-alpha-aminoacyl-[tubulin] + L-glutamate. It carries out the reaction C-terminal L-alpha-aminoacyl-L-glutamyl-L-glutamyl-[tubulin] + H2O = C-terminal L-alpha-aminoacyl-L-glutamyl-[tubulin] + L-glutamate. Its function is as follows. Metallocarboxypeptidase that mediates deglutamylation of tubulin and non-tubulin target proteins. Catalyzes the removal of polyglutamate side chains present on the gamma-carboxyl group of glutamate residues within the C-terminal tail of alpha- and beta-tubulin. Cleaves alpha- and gamma-linked polyglutamate tubulin side-chain, as well as the branching point glutamate. Also catalyzes the removal of alpha-linked glutamate residues from the carboxy-terminus of alpha-tubulin. Mediates deglutamylation of nucleotidyltransferase CGAS, leading to CGAS antiviral defense response activation. This chain is Cytosolic carboxypeptidase-like protein 5, found in Mus musculus (Mouse).